The sequence spans 89 residues: Small ribosomal subunit protein uS15 (89 aa).

Belongs to the universal ribosomal protein uS15 family. Part of the 30S ribosomal subunit. Forms a bridge to the 50S subunit in the 70S ribosome, contacting the 23S rRNA.

Functionally, one of the primary rRNA binding proteins, it binds directly to 16S rRNA where it helps nucleate assembly of the platform of the 30S subunit by binding and bridging several RNA helices of the 16S rRNA. In terms of biological role, forms an intersubunit bridge (bridge B4) with the 23S rRNA of the 50S subunit in the ribosome. The chain is Small ribosomal subunit protein uS15 from Protochlamydia amoebophila (strain UWE25).